The chain runs to 312 residues: Acetylglutamate kinase (312 aa).

Substrate contacts are provided by residues 76–77 (GG), arginine 98, and asparagine 199.

Belongs to the acetylglutamate kinase family. ArgB subfamily.

The protein localises to the cytoplasm. It catalyses the reaction N-acetyl-L-glutamate + ATP = N-acetyl-L-glutamyl 5-phosphate + ADP. It participates in amino-acid biosynthesis; L-arginine biosynthesis; N(2)-acetyl-L-ornithine from L-glutamate: step 2/4. Its function is as follows. Catalyzes the ATP-dependent phosphorylation of N-acetyl-L-glutamate. This chain is Acetylglutamate kinase, found in Beutenbergia cavernae (strain ATCC BAA-8 / DSM 12333 / CCUG 43141 / JCM 11478 / NBRC 16432 / NCIMB 13614 / HKI 0122).